Consider the following 140-residue polypeptide: ATP synthase epsilon chain 1 (140 aa).

This sequence belongs to the ATPase epsilon chain family. In terms of assembly, F-type ATPases have 2 components, CF(1) - the catalytic core - and CF(0) - the membrane proton channel. CF(1) has five subunits: alpha(3), beta(3), gamma(1), delta(1), epsilon(1). CF(0) has three main subunits: a, b and c.

The protein localises to the cell inner membrane. Its function is as follows. Produces ATP from ADP in the presence of a proton gradient across the membrane. The sequence is that of ATP synthase epsilon chain 1 from Photobacterium profundum (strain SS9).